The primary structure comprises 465 residues: ATP synthase subunit beta (465 aa).

ATP is bound at residue 155-162; sequence GGAGVGKT.

This sequence belongs to the ATPase alpha/beta chains family. F-type ATPases have 2 components, CF(1) - the catalytic core - and CF(0) - the membrane proton channel. CF(1) has five subunits: alpha(3), beta(3), gamma(1), delta(1), epsilon(1). CF(0) has three main subunits: a(1), b(2) and c(9-12). The alpha and beta chains form an alternating ring which encloses part of the gamma chain. CF(1) is attached to CF(0) by a central stalk formed by the gamma and epsilon chains, while a peripheral stalk is formed by the delta and b chains.

The protein resides in the cell membrane. The enzyme catalyses ATP + H2O + 4 H(+)(in) = ADP + phosphate + 5 H(+)(out). Produces ATP from ADP in the presence of a proton gradient across the membrane. The catalytic sites are hosted primarily by the beta subunits. The chain is ATP synthase subunit beta from Buchnera aphidicola subsp. Baizongia pistaciae (strain Bp).